Here is an 83-residue protein sequence, read N- to C-terminus: MFIIDDLFVSPFFSLLDILQTMALDEMYDTKSIRDDIKENQLLYEVGERSDEEYQQRKQALESQLEMAEQVQEQMRDRMEVKK.

The protein belongs to the gas vesicle GvpG family. In terms of assembly, gvpF to GvpM interact with each other in vitro, and may form multi-subunit complex(es). Might interact with GvpA1.

It localises to the gas vesicle. Functionally, proteins GvpF to GvpM might be involved in nucleating gas vesicle formation. A minor component of the gas vesicle. Gas vesicles are hollow, gas filled proteinaceous nanostructures found in several microbial planktonic microorganisms. They allow positioning of halobacteria at the optimal depth for growth in the poorly aerated, shallow brine pools of their habitat. In terms of biological role, expression of a 9.5 kb p-vac DNA fragment containing 2 divergently transcribed regions (gvpD-gvpE-gvpF-gvpG-gvpH-gvpI-gvpJ-gvpK-gvpL-gvpM and gvpA-gvpC-gvpN-gvpO) allows H.volcanii to produce gas vesicles. A minimal gas vesicle can be made in H.volcanii by gvpA1-gvpO1 plus gvpF1-gvpG1-gvpJ1-gvpK1-gvpL1-gvpM1; lack of enough GvpJ1 prevents formation. A similar region restores gas vesicle production in H.halobium without the p-vac locus, but it still has the c-vac locus. The sequence is that of Gas vesicle protein G1 (gvpG11) from Halobacterium salinarum (strain ATCC 700922 / JCM 11081 / NRC-1) (Halobacterium halobium).